Reading from the N-terminus, the 367-residue chain is ABI gene family member 3 (367 aa).

Residues 36–64 (CEDNYLQATDKRKALEETMAFTTQALASV) adopt a coiled-coil conformation. Residues 163-273 (LSRTGTLSRK…LEVSQPPLEA (111 aa)) form a disordered region. The span at 206–225 (SAASSASSLASAGSAEGASG) shows a compositional bias: low complexity. Phosphoserine occurs at positions 216 and 219. A compositionally biased stretch (pro residues) spans 236–264 (ATPPPPPVAPVTPPPPPLSAEVFLPPPPL). The SH3 domain occupies 309–367 (SYLEKVVTLYPYTRQKDNELSFSEGTVICVTRRYSDGWCEGVSSEGTGFFPGNYVEPSC). S343 carries the phosphoserine modification.

Belongs to the ABI family. As to quaternary structure, may interact with PAK1 and PAK2. Probably interacts with TARSH.

The protein localises to the cytoplasm. Inhibits ectopic tumor cell metastasis of SRD cells. In vitro, reduces cell motility. In Mus musculus (Mouse), this protein is ABI gene family member 3 (Abi3).